The sequence spans 1024 residues: Eukaryotic translation initiation factor 3 subunit A (1024 aa).

The region spanning 331–508 is the PCI domain; sequence VISSNAPGTG…QAITFQDDVF (178 aa). Coiled-coil stretches lie at residues 575–717 and 777–889; these read AAED…REEA and KRRG…RRSR. Composition is skewed to basic and acidic residues over residues 797 to 866 and 873 to 886; these read KERR…ERRA and DKQRQREEEAEANR. 2 disordered regions span residues 797–973 and 1001–1024; these read KERR…GAYR and AAAAESDGFTEVKKNVYRPPGRRA. 2 stretches are compositionally biased toward low complexity: residues 890 to 906 and 946 to 971; these read AAGTGAAPAQELAAADA and KEAAGGNATAAPSAPAAAPAPASSGA.

Belongs to the eIF-3 subunit A family. In terms of assembly, component of the eukaryotic translation initiation factor 3 (eIF-3) complex.

The protein localises to the cytoplasm. Functionally, RNA-binding component of the eukaryotic translation initiation factor 3 (eIF-3) complex, which is involved in protein synthesis of a specialized repertoire of mRNAs and, together with other initiation factors, stimulates binding of mRNA and methionyl-tRNAi to the 40S ribosome. The eIF-3 complex specifically targets and initiates translation of a subset of mRNAs involved in cell proliferation. The polypeptide is Eukaryotic translation initiation factor 3 subunit A (Mycosarcoma maydis (Corn smut fungus)).